The chain runs to 1697 residues: SAC3 family protein B (1697 aa).

Disordered stretches follow at residues 54 to 134 (PPAS…QPGG), 167 to 280 (QRPN…SRSN), 306 to 413 (EATR…EQAR), and 491 to 512 (ESER…VDGD). Positions 120–134 (QNPSPSSGQPYQPGG) are enriched in low complexity. The span at 178–192 (DGSRNFLKDHGEHSR) shows a compositional bias: basic and acidic residues. The span at 193 to 202 (ATSPPATSHI) shows a compositional bias: polar residues. Residues 215-227 (RSQDSKRKSRSDI) show a composition bias toward basic and acidic residues. 3 stretches are compositionally biased toward polar residues: residues 233 to 243 (MGFSRRNQSPV), 257 to 280 (PLSS…SRSN), and 335 to 380 (RFST…SPAT). A PCI domain is found at 625–813 (NIEQMNKTSV…KCSKLVHMKK (189 aa)).

This sequence belongs to the SAC3 family. As to quaternary structure, interacts with SAC3A, EER5 and CML19. Interacts with UCH1 and UCH2.

Its subcellular location is the nucleus. Functionally, component of the TREX-2 complex (transcription and export complex 2), a muliprotein complex that functions in docking export-competent ribonucleoprotein particles (mRNPs) to the nuclear entrance of the nuclear pore complex (nuclear basket). TREX-2 participates in mRNA export and accurate chromatin positioning in the nucleus by tethering genes to the nuclear periphery. The polypeptide is SAC3 family protein B (Arabidopsis thaliana (Mouse-ear cress)).